Consider the following 581-residue polypeptide: MNNKEITTLWCRLIIEELGRHGIHRFCISPGSRSTPLTAAAARNAGTRCTIFPDERAAAFFALGFARATGKPAVLICTSGTAVANYFPAVVEASFSNLPILVLSADRPFELFETGANQTIRQQGLFGTYSRWNIELPEPSEAIPAEALLSTIDYAVGRSLGSPPGPVHLNIPFREPFDPVNLSGPKPREASLTLWKQNNEPLNRFALSRKIADRAVVDRTKALLKNASSPLIVAGQLDSRTDAEAIGSLAETLDIPLYADISSQLRMNDTHAPLQPLLLSKRFTASFNPDLILHFGGKIVGKQLAITIKNRAPEHFIVINNSSRRYNPDHNVTLQIEAEPGEFAKLLVPEKSRSGKHERSLKALSDEIEKELDNYCASGKPLTEISTARILSGMIPESHGLFIANSMPIRDMDTYAALRKNGSAPLCAMNRGASGIDGNIATAAGLAQGLGTPVTLLIGDISFLHDLNSLTLLQGMEQPLHIVVVNNNGGGIFSFLPVATEKDIFETNFGTPQNYSIRAAAETFGISYNSPSSPESFKASYADLSRSAVSGIIEVNGSREENLAEHRRVNKQLRNIIDRHI.

It belongs to the TPP enzyme family. MenD subfamily. In terms of assembly, homodimer. Mg(2+) serves as cofactor. It depends on Mn(2+) as a cofactor. The cofactor is thiamine diphosphate.

It catalyses the reaction isochorismate + 2-oxoglutarate + H(+) = 5-enolpyruvoyl-6-hydroxy-2-succinyl-cyclohex-3-ene-1-carboxylate + CO2. It participates in quinol/quinone metabolism; 1,4-dihydroxy-2-naphthoate biosynthesis; 1,4-dihydroxy-2-naphthoate from chorismate: step 2/7. It functions in the pathway quinol/quinone metabolism; menaquinone biosynthesis. Functionally, catalyzes the thiamine diphosphate-dependent decarboxylation of 2-oxoglutarate and the subsequent addition of the resulting succinic semialdehyde-thiamine pyrophosphate anion to isochorismate to yield 2-succinyl-5-enolpyruvyl-6-hydroxy-3-cyclohexene-1-carboxylate (SEPHCHC). The sequence is that of 2-succinyl-5-enolpyruvyl-6-hydroxy-3-cyclohexene-1-carboxylate synthase from Chlorobium phaeobacteroides (strain BS1).